Consider the following 193-residue polypeptide: MPKGRRGSQSPTMSQRPAPPLYFPSLYDRGISSSPLSDFNIWKKLFVPLKAGGAPAGGAPAAGGRSLPQGPSAPAPPPPPGLGPPSERPCPPPWPSGLASIPYEPLRFFYSPPSGPEAAASPLAPGPMTSRLASASHPEELCELEIRIKELELLTITGDGFDSQRYKFLKALKDEKLQGLKTRQPGKKSASLS.

Disordered stretches follow at residues 1 to 21 (MPKGRRGSQSPTMSQRPAPPL), 53 to 96 (GAPA…PWPS), and 114 to 136 (SGPEAAASPLAPGPMTSRLASAS). Residues 53–70 (GAPAGGAPAAGGRSLPQG) are compositionally biased toward low complexity. Positions 71 to 95 (PSAPAPPPPPGLGPPSERPCPPPWP) are enriched in pro residues. Over residues 116-127 (PEAAASPLAPGP) the composition is skewed to low complexity.

This is an uncharacterized protein from Bos taurus (Bovine).